The following is a 438-amino-acid chain: Xanthine permease (438 aa).

The next 13 membrane-spanning stretches (helical) occupy residues 11-31 (LGIQ…LIVG), 41-61 (LTYL…LQVW), 65-85 (FFGI…SPMI), 100-120 (IIAS…LVSF), 121-141 (FPPV…MPVA), 154-174 (FGDL…VLLY), 180-200 (FIKS…AYFM), 220-240 (FYFG…IVAI), 272-292 (AEGL…TAFS), 308-328 (VIVV…IAAF), 331-351 (IIPS…VIAY), 367-387 (LLIV…PDIF), and 396-416 (LLTT…NIVY).

Belongs to the nucleobase:cation symporter-2 (NCS2) (TC 2.A.40) family.

It localises to the cell membrane. In terms of biological role, transport of xanthine in the cell. The polypeptide is Xanthine permease (pbuX) (Bacillus subtilis (strain 168)).